A 165-amino-acid chain; its full sequence is 3-isopropylmalate dehydratase small subunit (165 aa).

The protein belongs to the LeuD family. LeuD type 2 subfamily. In terms of assembly, heterodimer of LeuC and LeuD.

The catalysed reaction is (2R,3S)-3-isopropylmalate = (2S)-2-isopropylmalate. The protein operates within amino-acid biosynthesis; L-leucine biosynthesis; L-leucine from 3-methyl-2-oxobutanoate: step 2/4. Functionally, catalyzes the isomerization between 2-isopropylmalate and 3-isopropylmalate, via the formation of 2-isopropylmaleate. This Saccharolobus islandicus (strain Y.G.57.14 / Yellowstone #1) (Sulfolobus islandicus) protein is 3-isopropylmalate dehydratase small subunit.